Reading from the N-terminus, the 213-residue chain is Nucleoside triphosphate pyrophosphatase (213 aa).

The Proton acceptor role is filled by D79.

It belongs to the Maf family. It depends on a divalent metal cation as a cofactor.

Its subcellular location is the cytoplasm. The catalysed reaction is a ribonucleoside 5'-triphosphate + H2O = a ribonucleoside 5'-phosphate + diphosphate + H(+). It carries out the reaction a 2'-deoxyribonucleoside 5'-triphosphate + H2O = a 2'-deoxyribonucleoside 5'-phosphate + diphosphate + H(+). In terms of biological role, nucleoside triphosphate pyrophosphatase. May have a dual role in cell division arrest and in preventing the incorporation of modified nucleotides into cellular nucleic acids. This Rhodococcus erythropolis (strain PR4 / NBRC 100887) protein is Nucleoside triphosphate pyrophosphatase.